Here is a 407-residue protein sequence, read N- to C-terminus: Argininosuccinate synthase (407 aa).

ATP-binding positions include 13–21 (AYSGGLDTS) and Ala-40. Residues Tyr-91 and Ser-96 each coordinate L-citrulline. Gly-121 lines the ATP pocket. L-aspartate-binding residues include Thr-123, Asn-127, and Asp-128. Asn-127 contacts L-citrulline. Arg-131, Ser-182, Ser-191, Glu-267, and Tyr-279 together coordinate L-citrulline.

Belongs to the argininosuccinate synthase family. Type 1 subfamily. Homotetramer.

It localises to the cytoplasm. The catalysed reaction is L-citrulline + L-aspartate + ATP = 2-(N(omega)-L-arginino)succinate + AMP + diphosphate + H(+). It functions in the pathway amino-acid biosynthesis; L-arginine biosynthesis; L-arginine from L-ornithine and carbamoyl phosphate: step 2/3. The protein is Argininosuccinate synthase of Mesorhizobium japonicum (strain LMG 29417 / CECT 9101 / MAFF 303099) (Mesorhizobium loti (strain MAFF 303099)).